The following is a 223-amino-acid chain: Cytotoxic T-lymphocyte protein 4 (223 aa).

The N-terminal stretch at 1–35 (MACLGLRRYKAQLQLPSRTWPFVALLTLLFIPVFS) is a signal peptide. The Ig-like V-type domain occupies 36 to 145 (EAIQVTQPSV…PPPYFVGMGN (110 aa)). At 36–161 (EAIQVTQPSV…IDPEPCPDSD (126 aa)) the chain is on the extracellular side. The tract at residues 46 to 50 (VLASS) is homodimerization. Disulfide bonds link cysteine 58–cysteine 129 and cysteine 85–cysteine 103. Residues asparagine 108 and asparagine 113 are each glycosylated (N-linked (GlcNAc...) asparagine). The segment at 134-139 (MYPPPY) is important for interaction with CD80 and CD86. A glycan (N-linked (GlcNAc...) asparagine) is linked at asparagine 145. The tract at residues 150 to 155 (YVIDPE) is homodimerization. Residues 162 to 182 (FLLWILVAVSLGLFFYSFLVS) traverse the membrane as a helical segment. At 183–223 (AVSLSKMLKKRSPLTTGVYVKMPPTEPECEKQFQPYFIPIN) the chain is on the cytoplasmic side. Phosphotyrosine; by TXK and JAK2 is present on tyrosine 201.

Homodimer; disulfide-linked. Binds to CD80/B7-1 and CD86/B7.2. Interacts with ICOSLG. Post-translationally, N-glycosylation is important for dimerization. In terms of processing, phosphorylation at Tyr-201 prevents binding to the AP-2 adapter complex, blocks endocytosis, and leads to retention of CTLA4 on the cell surface. Widely expressed with highest levels in lymphoid tissues.

It is found in the cell membrane. Its function is as follows. Inhibitory receptor acting as a major negative regulator of T-cell responses. The affinity of CTLA4 for its natural B7 family ligands, CD80 and CD86, is considerably stronger than the affinity of their cognate stimulatory coreceptor CD28. This is Cytotoxic T-lymphocyte protein 4 (Ctla4) from Mus musculus (Mouse).